We begin with the raw amino-acid sequence, 30 residues long: Trypsin inhibitor 6 (30 aa).

Intrachain disulfides connect cysteine 4–cysteine 21, cysteine 11–cysteine 23, and cysteine 17–cysteine 29.

The protein belongs to the protease inhibitor I7 (squash-type serine protease inhibitor) family.

Its subcellular location is the secreted. Its function is as follows. Strongly inhibits trypsin, weakly inhibits chymotrypsin. The chain is Trypsin inhibitor 6 from Cyclanthera pedata (Achocha).